Here is a 6298-residue protein sequence, read N- to C-terminus: Adhesion G-protein coupled receptor V1 (6298 aa).

The N-terminal stretch at 1–28 is a signal peptide; it reads MSVTSEPGMISSFLLVYLSTLFISFVFG. Calx-beta domains follow at residues 29 to 116, 132 to 236, 251 to 362, 389 to 489, 646 to 746, 764 to 862, 877 to 980, 994 to 1094, 1108 to 1208, 1440 to 1540, 1562 to 1662, 1706 to 1805, 1846 to 1948, 1962 to 2075, 2103 to 2202, 2218 to 2320, 2437 to 2537, 2576 to 2672, 2687 to 2786, 2810 to 2921, 2945 to 3044, and 3067 to 3167; these read EAEI…FHLT, ASVT…IQLR, VEII…IMLL, YGVL…LTIL, PAIA…TLSL, DLII…VILS, VNIT…IILL, ASLR…IVLF, ATVI…LRLV, AMPR…FLLK, QKSD…VTLV, TGLP…VELL, ILVT…VSIL, TLTI…IELF, HLVI…VQLL, VITI…VQLA, TLCL…FLIS, FIIY…VRLG, VTVN…VVLY, LTVE…VNLT, QIVI…LLLT, and DGPG…VCTL. Topologically, residues 29–5901 are extracellular; that stretch reads EAEIRFTGQT…TDNSSSYNEA (5873 aa). EAR repeat units lie at residues 3251–3292, 3293–3341, 3344–3389, 3391–3435, 3437–3484, and 3488–3530; these read VFSI…RWQG, TFVP…MLTA, RLVL…RWNG, NFAW…TWSG, QFIN…VWEM, and SLRY…CWNS. 13 consecutive Calx-beta domains span residues 3581-3622, 3636-3736, 3772-3872, 3919-4003, 4017-4120, 4135-4235, 4251-4351, 4384-4484, 4507-4607, 4628-4728, 4989-5089, 5281-5325, and 5361-5461; these read QSDF…RVQL, SVRV…VVTL, GAVR…VTIA, GGVI…ISLV, VNVV…IELT, SVII…EFQL, ARIT…LAIT, RIII…ILLI, SPFG…IVQL, KFGD…AVQL, TTAE…INLT, AVEE…YVFL, and IGFS…FVEL. A GAIN-B domain is found at 5740–5896; the sequence is SILALHWNPQ…AVYAQTDNSS (157 aa). 2 disulfide bridges follow: cysteine 5849-cysteine 5878 and cysteine 5866-cysteine 5880. The tract at residues 5849–5896 is GPS; the sequence is CLLWNQAAASWLSDSQFCKVVEDASDYVECACSHMSVYAVYAQTDNSS. Residues 5902 to 5922 form a helical membrane-spanning segment; the sequence is FFSAGLICISGLCLAVVSHMF. Residues 5923–5932 are Cytoplasmic-facing; it reads CARHSMFAAK. The chain crosses the membrane as a helical span at residues 5933–5953; sequence LLTHMMVASLGTQILFLASAY. Topologically, residues 5954-5973 are extracellular; it reads ASPHLSEESCSAVAAVAHYL. Residues 5974 to 5994 form a helical membrane-spanning segment; it reads YLCQFSWMLIQSVNFWYVLVV. Over 5995–6003 the chain is Cytoplasmic; sequence SDEHTERRC. A helical transmembrane segment spans residues 6004–6024; the sequence is LLFCLLSWGLPSFVVILLILI. Residues 6025-6052 lie on the Extracellular side of the membrane; it reads LRGIYHRSMPQIYGLIHGDLCFIPNIYA. Residues 6053–6073 traverse the membrane as a helical segment; it reads ALFTAALVPLMCLVVVFVVFI. Topologically, residues 6074–6097 are cytoplasmic; the sequence is HAYQLKPQWKGYDDVFRGRTNAAE. The helical transmembrane segment at 6098-6118 threads the bilayer; it reads IPLILYLFALISMTWLWGGLH. At 6119–6126 the chain is on the extracellular side; that stretch reads MAYGHFWM. The chain crosses the membrane as a helical span at residues 6127-6147; the sequence is LVLFVIFNSLQGLYVFVVYFI. The Cytoplasmic portion of the chain corresponds to 6148–6298; that stretch reads LHNQTCCPMK…RRIPIADTHL (151 aa). Disordered stretches follow at residues 6206 to 6242 and 6264 to 6283; these read ERSS…GSLI and SVSD…LTDS. Polar residues-rich tracts occupy residues 6208–6226 and 6265–6283; these read SSFQ…SPQN and VSDN…LTDS.

Belongs to the G-protein coupled receptor 2 family. Adhesion G-protein coupled receptor (ADGR) subfamily. As to quaternary structure, forms a heterodimer, consisting of a large extracellular region (alpha subunit) non-covalently linked to a seven-transmembrane moiety (beta subunit). Interacts (via the cytoplasmic region) with PDZD7. Component of USH2 complex, composed of ADGRV1, PDZD7, USH2A and WHRN. Interacts with USH2A and WHRN. Interacts (via the cytoplasmic region) with MYO7A (via MyTH4-FERM domains). In terms of processing, autoproteolytically cleaved into 2 subunits, an extracellular alpha subunit and a seven-transmembrane subunit. Expressed by oligodendrocytes. In midbrain, enriched in the myelinated regions of the superior and inferior colliculi. In the cochlea, expressed in developing hair cells. Expressed by photoreceptors in the retina.

It is found in the cell membrane. Its subcellular location is the cell projection. The protein resides in the stereocilium membrane. It localises to the photoreceptor inner segment. The protein localises to the secreted. Functionally, G-protein coupled receptor which has an essential role in the development of hearing and vision. Couples to G-alpha(i)-proteins, GNAI1/2/3, G-alpha(q)-proteins, GNAQ, as well as G-alpha(s)-proteins, GNAS, inhibiting adenylate cyclase (AC) activity and cAMP production. Required for the hair bundle ankle formation, which connects growing stereocilia in developing cochlear hair cells of the inner ear. In response to extracellular calcium, activates kinases PKA and PKC to regulate myelination by inhibiting the ubiquitination of MAG, thus enhancing the stability of this protein in myelin-forming cells of the auditory pathway. In retina photoreceptors, the USH2 complex is required for the maintenance of periciliary membrane complex that seems to play a role in regulating intracellular protein transport. Involved in the regulation of bone metabolism. Cleaved ADGRV1 beta-subunit couples with G-alpha(i)-proteins, GNAI1/2/3, and constitutively inhibits adenylate cyclase (AC) activity with a stronger effect than full ADGRV1. The sequence is that of Adhesion G-protein coupled receptor V1 from Mus musculus (Mouse).